The sequence spans 469 residues: RuvB-like helicase 2 (469 aa).

An ATP-binding site is contributed by 73-80; the sequence is GEPGTGKT.

The protein belongs to the RuvB family. As to quaternary structure, forms homohexameric rings. May form a dodecamer with rvb1 made of two stacked hexameric rings. Component of the chromatin remodeling Ino80 complex. Component of the RNA polymerase II holoenzyme complex.

Its subcellular location is the nucleus. It carries out the reaction ATP + H2O = ADP + phosphate + H(+). In terms of biological role, has double-stranded DNA-stimulated ATPase and ATP-dependent DNA helicase (5' to 3') activity suggesting a role in nuclear processes such as recombination and transcription. Functionally, proposed core component of the chromatin remodeling Ino80 complex which is involved in transcriptional regulation, DNA replication and probably DNA repair. The sequence is that of RuvB-like helicase 2 (rvb2) from Dictyostelium discoideum (Social amoeba).